The chain runs to 516 residues: uncharacterized protein (516 aa).

A Phosphoserine modification is found at serine 21. Residues 46–74 (DLQSSMEDSNKANGNGEETTDGAEGVLQT) form a disordered region. Residues 47–62 (LQSSMEDSNKANGNGE) are compositionally biased toward polar residues. 6 WD repeats span residues 182–227 (TFPL…AVYP), 252–292 (YHTD…CVKS), 295–335 (YHSD…APSS), 337–377 (QVTS…KSVW), 381–421 (AHDG…PKMV), and 426–468 (LDVG…GVRK). The segment covering 482 to 493 (ERIVQLEDRGAG) has biased composition (basic and acidic residues). A disordered region spans residues 482–516 (ERIVQLEDRGAGEDSSDDDDYEDIEDDDDQDAEMS). Acidic residues predominate over residues 495 to 516 (DSSDDDDYEDIEDDDDQDAEMS). Phosphoserine is present on residues serine 496 and serine 497.

The protein resides in the cytoplasm. It is found in the nucleus. Its subcellular location is the nucleolus. This is an uncharacterized protein from Schizosaccharomyces pombe (strain 972 / ATCC 24843) (Fission yeast).